The chain runs to 398 residues: Cysteine desulfurase (398 aa).

Pyridoxal 5'-phosphate is bound by residues G74–T75, N155, Q182, and C202–H204. An N6-(pyridoxal phosphate)lysine modification is found at K205. Over residues G230–A244 the composition is skewed to basic and acidic residues. A disordered region spans residues G230 to A253. C327 acts as the Cysteine persulfide intermediate in catalysis. [2Fe-2S] cluster is bound at residue C327.

Belongs to the class-V pyridoxal-phosphate-dependent aminotransferase family. NifS/IscS subfamily. Homodimer. It depends on pyridoxal 5'-phosphate as a cofactor.

It catalyses the reaction (sulfur carrier)-H + L-cysteine = (sulfur carrier)-SH + L-alanine. In terms of biological role, catalyzes the removal of elemental sulfur atoms from cysteine to produce alanine. Seems to participate in the biosynthesis of the nitrogenase metalloclusters by providing the inorganic sulfur required for the Fe-S core formation. The chain is Cysteine desulfurase from Azospirillum brasilense.